The primary structure comprises 373 residues: Dual-specificity RNA methyltransferase RlmN (373 aa).

Residue Glu-94 is the Proton acceptor of the active site. Positions 100–339 (EDDRATLCVS…VIVRKTRGDD (240 aa)) constitute a Radical SAM core domain. Cys-107 and Cys-344 form a disulfide bridge. The [4Fe-4S] cluster site is built by Cys-114, Cys-118, and Cys-121. Residues 168–169 (GE), Ser-200, 222–224 (SIH), and Asn-301 contribute to the S-adenosyl-L-methionine site. Residue Cys-344 is the S-methylcysteine intermediate of the active site.

Belongs to the radical SAM superfamily. RlmN family. Requires [4Fe-4S] cluster as cofactor.

The protein localises to the cytoplasm. It carries out the reaction adenosine(2503) in 23S rRNA + 2 reduced [2Fe-2S]-[ferredoxin] + 2 S-adenosyl-L-methionine = 2-methyladenosine(2503) in 23S rRNA + 5'-deoxyadenosine + L-methionine + 2 oxidized [2Fe-2S]-[ferredoxin] + S-adenosyl-L-homocysteine. It catalyses the reaction adenosine(37) in tRNA + 2 reduced [2Fe-2S]-[ferredoxin] + 2 S-adenosyl-L-methionine = 2-methyladenosine(37) in tRNA + 5'-deoxyadenosine + L-methionine + 2 oxidized [2Fe-2S]-[ferredoxin] + S-adenosyl-L-homocysteine. In terms of biological role, specifically methylates position 2 of adenine 2503 in 23S rRNA and position 2 of adenine 37 in tRNAs. m2A2503 modification seems to play a crucial role in the proofreading step occurring at the peptidyl transferase center and thus would serve to optimize ribosomal fidelity. The protein is Dual-specificity RNA methyltransferase RlmN of Shewanella baltica (strain OS185).